Reading from the N-terminus, the 471-residue chain is Ribulose bisphosphate carboxylase large chain (471 aa).

Lys-5 bears the N6,N6,N6-trimethyllysine mark. Positions 114 and 164 each coordinate substrate. Residue Lys-166 is the Proton acceptor of the active site. Residue Lys-168 coordinates substrate. Lys-192, Asp-194, and Glu-195 together coordinate Mg(2+). At Lys-192 the chain carries N6-carboxylysine. His-285 (proton acceptor) is an active-site residue. Substrate contacts are provided by Arg-286, His-318, and Ser-370.

The protein belongs to the RuBisCO large chain family. Type I subfamily. As to quaternary structure, heterohexadecamer of 8 large chains and 8 small chains; disulfide-linked. The disulfide link is formed within the large subunit homodimers. The cofactor is Mg(2+). The disulfide bond which can form in the large chain dimeric partners within the hexadecamer appears to be associated with oxidative stress and protein turnover.

The protein localises to the plastid. Its subcellular location is the chloroplast. The catalysed reaction is 2 (2R)-3-phosphoglycerate + 2 H(+) = D-ribulose 1,5-bisphosphate + CO2 + H2O. It carries out the reaction D-ribulose 1,5-bisphosphate + O2 = 2-phosphoglycolate + (2R)-3-phosphoglycerate + 2 H(+). Functionally, ruBisCO catalyzes two reactions: the carboxylation of D-ribulose 1,5-bisphosphate, the primary event in carbon dioxide fixation, as well as the oxidative fragmentation of the pentose substrate in the photorespiration process. Both reactions occur simultaneously and in competition at the same active site. This Chiococca alba (West Indian milkberry) protein is Ribulose bisphosphate carboxylase large chain.